Here is a 289-residue protein sequence, read N- to C-terminus: Pantothenate synthetase (289 aa).

Residue 28 to 35 (MGCLHEGH) coordinates ATP. His-35 serves as the catalytic Proton donor. Gln-59 is a (R)-pantoate binding site. Residue Gln-59 coordinates beta-alanine. 147-150 (GLKD) serves as a coordination point for ATP. Gln-153 contributes to the (R)-pantoate binding site. ATP-binding positions include Val-176 and 184–187 (MSSR).

Belongs to the pantothenate synthetase family. In terms of assembly, homodimer.

It localises to the cytoplasm. It carries out the reaction (R)-pantoate + beta-alanine + ATP = (R)-pantothenate + AMP + diphosphate + H(+). It participates in cofactor biosynthesis; (R)-pantothenate biosynthesis; (R)-pantothenate from (R)-pantoate and beta-alanine: step 1/1. Functionally, catalyzes the condensation of pantoate with beta-alanine in an ATP-dependent reaction via a pantoyl-adenylate intermediate. This chain is Pantothenate synthetase, found in Magnetococcus marinus (strain ATCC BAA-1437 / JCM 17883 / MC-1).